Here is a 139-residue protein sequence, read N- to C-terminus: Nucleoside diphosphate kinase (139 aa).

Positions 11, 59, 87, 93, 104, and 114 each coordinate ATP. H117 functions as the Pros-phosphohistidine intermediate in the catalytic mechanism.

It belongs to the NDK family. In terms of assembly, homotetramer. Mg(2+) serves as cofactor.

Its subcellular location is the cytoplasm. It carries out the reaction a 2'-deoxyribonucleoside 5'-diphosphate + ATP = a 2'-deoxyribonucleoside 5'-triphosphate + ADP. The enzyme catalyses a ribonucleoside 5'-diphosphate + ATP = a ribonucleoside 5'-triphosphate + ADP. Functionally, major role in the synthesis of nucleoside triphosphates other than ATP. The ATP gamma phosphate is transferred to the NDP beta phosphate via a ping-pong mechanism, using a phosphorylated active-site intermediate. The protein is Nucleoside diphosphate kinase of Wolbachia sp. subsp. Drosophila simulans (strain wRi).